A 203-amino-acid chain; its full sequence is MSMEDYDFLFKIVLIGNAGVGKTCLVRRFTQGLFPPGQGATIGVDFMIKTVEINGEKVKLQIWDTAGQERFRSITQSYYRSANALILTYDITCEESFRCLPEWLREIEQYASNKVITVLVGNKIDLAERREVSQQRAEEFSEAQDMYYLETSAKESDNVEKLFLDLACRLISEARQNTLVNNVSSPLPGEGKSISYLTCCNFN.

GTP contacts are provided by valine 20, glycine 21, lysine 22, threonine 23, cysteine 24, and threonine 41. A Mg(2+)-binding site is contributed by threonine 23. The switch-I stretch occupies residues proline 36–valine 44. Mg(2+)-binding residues include threonine 41 and aspartate 64. GTP-binding residues include glycine 67, asparagine 122, lysine 123, aspartate 125, alanine 153, and lysine 154. The tract at residues glycine 67–asparagine 83 is switch-II. Residues cysteine 199 and cysteine 200 are each lipidated (S-geranylgeranyl cysteine). Position 200 is a cysteine methyl ester (cysteine 200). Positions asparagine 201–asparagine 203 are cleaved as a propeptide — removed in mature form.

This sequence belongs to the small GTPase superfamily. Rab family. The cofactor is Mg(2+).

The protein localises to the membrane. Its subcellular location is the golgi apparatus. It is found in the trans-Golgi network membrane. It localises to the cis-Golgi network membrane. The protein resides in the golgi apparatus membrane. The protein localises to the cytoplasm. Its subcellular location is the cytoplasmic vesicle. It is found in the autophagosome membrane. It localises to the autolysosome membrane. The catalysed reaction is GTP + H2O = GDP + phosphate + H(+). With respect to regulation, regulated by guanine nucleotide exchange factors (GEFs) which promote the exchange of bound GDP for free GTP. Regulated by GTPase activating proteins (GAPs) which increase the GTP hydrolysis activity. Inhibited by GDP dissociation inhibitors (GDIs). In terms of biological role, the small GTPases Rab are key regulators of intracellular membrane trafficking, from the formation of transport vesicles to their fusion with membranes. Rabs cycle between an inactive GDP-bound form and an active GTP-bound form that is able to recruit to membranes different sets of downstream effectors directly responsible for vesicle formation, movement, tethering and fusion. RAB30 is required for maintaining the structural integrity of the Golgi apparatus, possibly by mediating interactions with cytoplasmic scaffolding proteins. Facilitates lipid homeostasis during fasting by regulating hepatic protein and lipid trafficking in a PPAR-alpha-dependent manner. Promotes autophagosome biogenesis during bacterial infection such as group A Streptococcus infection. The sequence is that of Ras-related protein Rab-30 (RAB30) from Bos taurus (Bovine).